A 1107-amino-acid chain; its full sequence is DNA-directed RNA polymerase subunit beta (1107 aa).

Over residues 1062 to 1075 (DNEGNEKEKARELG) the composition is skewed to basic and acidic residues. The segment at 1062–1081 (DNEGNEKEKARELGLDLPDN) is disordered.

Belongs to the RNA polymerase beta chain family. The RNAP catalytic core consists of 2 alpha, 1 beta, 1 beta' and 1 omega subunit. When a sigma factor is associated with the core the holoenzyme is formed, which can initiate transcription.

It carries out the reaction RNA(n) + a ribonucleoside 5'-triphosphate = RNA(n+1) + diphosphate. DNA-dependent RNA polymerase catalyzes the transcription of DNA into RNA using the four ribonucleoside triphosphates as substrates. This chain is DNA-directed RNA polymerase subunit beta, found in Syntrophomonas wolfei subsp. wolfei (strain DSM 2245B / Goettingen).